Consider the following 141-residue polypeptide: Large ribosomal subunit protein uL11 (141 aa).

It belongs to the universal ribosomal protein uL11 family. In terms of assembly, part of the ribosomal stalk of the 50S ribosomal subunit. Interacts with L10 and the large rRNA to form the base of the stalk. L10 forms an elongated spine to which L12 dimers bind in a sequential fashion forming a multimeric L10(L12)X complex. One or more lysine residues are methylated.

Its function is as follows. Forms part of the ribosomal stalk which helps the ribosome interact with GTP-bound translation factors. In Chlorobaculum tepidum (strain ATCC 49652 / DSM 12025 / NBRC 103806 / TLS) (Chlorobium tepidum), this protein is Large ribosomal subunit protein uL11.